The sequence spans 1098 residues: Ubiquitin carboxyl-terminal hydrolase 36 (1098 aa).

Residues 72–86 (RHRSGDELQARKPGT) are compositionally biased toward basic and acidic residues. Residues 72–97 (RHRSGDELQARKPGTERVSGSGGDGV) form a disordered region. Residues 122 to 423 (AGLHNLGNTC…QAYVLFYLRI (302 aa)) form the USP domain. Residue cysteine 131 is the Nucleophile of the active site. Residue histidine 382 is the Proton acceptor of the active site. 2 disordered regions span residues 428–464 (KSPE…VPSP) and 483–574 (EVGV…RDTI). Serine 429, serine 463, serine 547, and serine 578 each carry phosphoserine. Over residues 540–558 (PLQSLTTSPTTSQGSPGTG) the composition is skewed to low complexity. The segment at 589-640 (GHRLKGEGSGVDLEKGDSSSSSPEHSASSDPAKAPQTAESRAAHACDSQGTN) is disordered. Residues 606–617 (SSSSSPEHSASS) show a composition bias toward low complexity. Serine 663 is subject to Phosphoserine. Disordered stretches follow at residues 664–710 (PALS…SPSA) and 722–973 (HPVV…ALSV). Over residues 665 to 677 (ALSSTTTEPTSLM) the composition is skewed to polar residues. Serine 678 carries the post-translational modification Phosphoserine. The segment covering 683–692 (KKLALSAKKA) has biased composition (low complexity). Position 709 is a phosphoserine (serine 709). A compositionally biased stretch (low complexity) spans 746 to 763 (HPHSASLSSSSAKPLGTS). Residues 853–878 (GQFQDQSWSSGSQKEEGTQPQVNGHQ) are compositionally biased toward polar residues. Over residues 889–898 (SSRKRRKRKR) the composition is skewed to basic residues. The segment covering 901–917 (GLSQEATPSQDLIQHSC) has biased composition (polar residues). Basic and acidic residues predominate over residues 921–932 (DHSEPEARTELQ). Over residues 933–943 (KKKKKKRRKRK) the composition is skewed to basic residues. Residues 944-960 (PEPQQDEESKHPGDQRS) show a composition bias toward basic and acidic residues.

Belongs to the peptidase C19 family. As to quaternary structure, interacts with isoform 3 of FBXW7; the interaction inhibits MYC degradation induced by SCF(FBW7) complex. Interacts with NTRK1; USP36 does not deubiquitinate NTRK1. Interacts with NEDD4L (via domains WW1, 3 and 4); the interaction inhibits ubiquitination of, at least, NTRK1, KCNQ2 and KCNQ3 by NEDD4L. Interacts (via C-terminus) with EXOSC10 (via C-terminus); the interaction is facilitated by the association with RNA and promotes sumoylation of EXOSC10. Polyubiquitinated by NEDD4L, no effect on USP36 protein levels. Both proteins interact with and regulate each other's ubiquitination levels.

The protein localises to the nucleus. It is found in the nucleolus. Its subcellular location is the cytoplasm. It catalyses the reaction Thiol-dependent hydrolysis of ester, thioester, amide, peptide and isopeptide bonds formed by the C-terminal Gly of ubiquitin (a 76-residue protein attached to proteins as an intracellular targeting signal).. Its function is as follows. Deubiquitinase essential for the regulation of nucleolar structure and function. Required for cell and organism viability. Plays an important role in ribosomal RNA processing and protein synthesis, which is mediated, at least in part, through deubiquitination of DHX33, NPM1 and FBL, regulating their protein stability. Functions as a transcriptional repressor by deubiquiting histone H2B at the promoters of genes critical for cellular differentiation, such as CDKN1A, thereby preventing histone H3 'Lys-4' trimethylation (H3K4). Specifically deubiquitinates MYC in the nucleolus, leading to prevent MYC degradation by the proteasome: acts by specifically interacting with isoform 3 of FBXW7 (FBW7gamma) in the nucleolus and counteracting ubiquitination of MYC by the SCF(FBW7) complex. In contrast, it does not interact with isoform 1 of FBXW7 (FBW7alpha) in the nucleoplasm. Interacts to and regulates the actions of E3 ubiquitin-protein ligase NEDD4L over substrates such as NTRK1, KCNQ2 and KCNQ3, affecting their expression an functions. Deubiquitinates SOD2, regulates SOD2 protein stability. Deubiquitinase activity is required to control selective autophagy activation by ubiquitinated proteins. Promotes CEP63 stabilization through 'Lys-48'-linked deubiquitination leading to increased stability. Acts as a SUMO ligase to promote EXOSC10 sumoylation critical for the nucleolar RNA exosome function in rRNA processing. Binds to pre-rRNAs. The protein is Ubiquitin carboxyl-terminal hydrolase 36 (Usp36) of Mus musculus (Mouse).